The sequence spans 320 residues: MAQVLRGTVTDFPGFDERADAETLRKAMKGLGTDEESILTLLTSRSNAQRQEISAAFKTLFGRDLLDDLKSELTGKFEKLIVALMKPSRLYDAYELKHALKGAGTNEKVLTEIIASRTPEELRAIKQVYEEEYGSSLEDDVVGDTSGYYQRMLVVLLQANRDPDAGIDEAQVEQDAQALFQAGELKWGTDEEKFITIFGTRSVSHLRKVFDKYMTISGFQIEETIDRETSGNLEQLLLAVVKSIRSIPAYLAETLYYAMKGAGTDDHTLIRVMVSRSEIDLFNIRKEFRKNFATSLYSMIKGDTSGDYKKALLLLCGEDD.

Alanine 2 is modified (N-acetylalanine). Annexin repeat units follow at residues 15–86 (FDER…ALMK), 87–158 (PSRL…VLLQ), 170–242 (AQVE…AVVK), and 246–317 (SIPA…LLCG). Lysine 29 is covalently cross-linked (Glycyl lysine isopeptide (Lys-Gly) (interchain with G-Cter in SUMO1); alternate). Lysine 29 is covalently cross-linked (Glycyl lysine isopeptide (Lys-Gly) (interchain with G-Cter in SUMO2); alternate). Phosphoserine is present on serine 37. Lysine 70, lysine 76, lysine 79, lysine 97, and lysine 101 each carry N6-acetyllysine. Position 290 is an N6-succinyllysine (lysine 290). A [IL]-x-C-x-x-[DE] motif motif is present at residues 314–319 (LLCGED).

Belongs to the annexin family. As to quaternary structure, monomer. Binds ATRX and EIF5B. Interacts with hepatitis B virus (HBV). S-nitrosylation is induced by interferon-gamma and oxidatively-modified low-densitity lipoprotein (LDL(ox)) possibly implicating the iNOS-S100A8/9 transnitrosylase complex.

This protein is an anticoagulant protein that acts as an indirect inhibitor of the thromboplastin-specific complex, which is involved in the blood coagulation cascade. The protein is Annexin A5 (ANXA5) of Homo sapiens (Human).